Reading from the N-terminus, the 133-residue chain is Small ribosomal subunit protein uS8 (133 aa).

The protein belongs to the universal ribosomal protein uS8 family. Part of the 30S ribosomal subunit. Contacts proteins S5 and S12.

One of the primary rRNA binding proteins, it binds directly to 16S rRNA central domain where it helps coordinate assembly of the platform of the 30S subunit. In Prochlorococcus marinus (strain MIT 9312), this protein is Small ribosomal subunit protein uS8.